The primary structure comprises 324 residues: Quinolinate synthase (324 aa).

2 residues coordinate iminosuccinate: histidine 39 and serine 56. Residue cysteine 101 coordinates [4Fe-4S] cluster. Iminosuccinate contacts are provided by residues 127–129 (YIN) and serine 144. Residue cysteine 187 participates in [4Fe-4S] cluster binding. Residues 213–215 (HPE) and threonine 230 contribute to the iminosuccinate site. Cysteine 280 contacts [4Fe-4S] cluster.

Belongs to the quinolinate synthase family. Type 2 subfamily. It depends on [4Fe-4S] cluster as a cofactor.

The protein localises to the cytoplasm. The enzyme catalyses iminosuccinate + dihydroxyacetone phosphate = quinolinate + phosphate + 2 H2O + H(+). It participates in cofactor biosynthesis; NAD(+) biosynthesis; quinolinate from iminoaspartate: step 1/1. In terms of biological role, catalyzes the condensation of iminoaspartate with dihydroxyacetone phosphate to form quinolinate. The sequence is that of Quinolinate synthase from Nostoc sp. (strain PCC 7120 / SAG 25.82 / UTEX 2576).